Here is a 124-residue protein sequence, read N- to C-terminus: MDSLHSTMNQHVKGKHLSFEERVIIQLRLKDGYSLRAIARELNCSPSTISYEVKRGTVKLYHGKVKKYKATQGHDAYKAHRKNCGRKSDFLRKAQFMRYVHKHFFKDGWSLDVCSNRATAVGEF.

This is an uncharacterized protein from Lactobacillus acidophilus.